A 225-amino-acid chain; its full sequence is Lectin (225 aa).

Homotetramer.

Functionally, chitin-binding lectin. Agglutinates rabbit erythrocytes, but not human erythrocytes. The polypeptide is Lectin (Vachellia farnesiana (Sweet acacia)).